Reading from the N-terminus, the 511-residue chain is Sorting nexin MVP1 (511 aa).

The interval 1 to 36 (MDNYEGSDPWNTSSNAWTKDDDHVVSTTNSEPSLNG) is disordered. Polar residues predominate over residues 25 to 36 (VSTTNSEPSLNG). The 120-residue stretch at 128-247 (DADIIIIEEI…TFLTVRTDLT (120 aa)) folds into the PX domain. A 1,2-diacyl-sn-glycero-3-phospho-(1D-myo-inositol-3-phosphate) contacts are provided by R172, S174, K198, and R213.

This sequence belongs to the sorting nexin family. As to quaternary structure, homodimer. Forms an autoinhibited tetramer consisting of 2 homodimers that self-interact, wherein the membrane-interacting BAR surfaces are sequestered and the PX lipid-binding sites are occluded. Interacts with VPS1.

Its subcellular location is the cytoplasm. The protein resides in the endosome membrane. Its function is as follows. Required for vacuolar protein sorting. Component of the retromer-mediated endosome-to-Golgi retrograde pathway. Required for efficient cargo export from the endosome, promoting VPS1-mediated fission of retromer-coated tubules that bud from the endosome. This Saccharomyces cerevisiae (strain ATCC 204508 / S288c) (Baker's yeast) protein is Sorting nexin MVP1 (MVP1).